The sequence spans 27 residues: Kunitz-type serine protease inhibitor 3 (27 aa).

In terms of domain architecture, BPTI/Kunitz inhibitor spans glutamate 1–valine 27.

It is found in the secreted. Functionally, inhibits bovine trypsin and human neutrophil elastase. This is Kunitz-type serine protease inhibitor 3 from Rhipicephalus microplus (Cattle tick).